Here is a 191-residue protein sequence, read N- to C-terminus: Transcription factor FapR (191 aa).

The 68-residue stretch at 102–169 (GIARGHHLFA…RILVTSHVNQ (68 aa)) folds into the MaoC-like domain.

The protein belongs to the FapR family.

Functionally, transcriptional factor involved in regulation of membrane lipid biosynthesis by repressing genes involved in fatty acid and phospholipid metabolism. This chain is Transcription factor FapR, found in Shouchella clausii (strain KSM-K16) (Alkalihalobacillus clausii).